A 94-amino-acid polypeptide reads, in one-letter code: Cell division protein FtsB (94 aa).

At 1-8 the chain is on the cytoplasmic side; sequence MRLRSPYW. The chain crosses the membrane as a helical span at residues 9–26; that stretch reads LFVVLILALAGLQYRLWV. Residues 27–94 are Periplasmic-facing; the sequence is GDGSLAQVRD…DGETLYQLAK (68 aa). Residues 31 to 78 adopt a coiled-coil conformation; it reads LAQVRDLQKQIADQHGENERLLERNRILEAEVAELKKGTETVEERARH.

This sequence belongs to the FtsB family. Part of a complex composed of FtsB, FtsL and FtsQ.

Its subcellular location is the cell inner membrane. Functionally, essential cell division protein. May link together the upstream cell division proteins, which are predominantly cytoplasmic, with the downstream cell division proteins, which are predominantly periplasmic. In Pseudomonas aeruginosa (strain ATCC 15692 / DSM 22644 / CIP 104116 / JCM 14847 / LMG 12228 / 1C / PRS 101 / PAO1), this protein is Cell division protein FtsB.